The following is a 633-amino-acid chain: Probable methyltransferase PMT15 (633 aa).

At 1-24 the chain is on the cytoplasmic side; that stretch reads MGNYRWPSKLSKLSLRAKQTNLYR. A helical; Signal-anchor for type II membrane protein transmembrane segment spans residues 25–45; the sequence is VILIAILCVTFYFVGVWQHSG. The Lumenal segment spans residues 46–633; that stretch reads RGISRSSISN…APAPDQSSDP (588 aa). 2 N-linked (GlcNAc...) asparagine glycosylation sites follow: asparagine 113 and asparagine 298.

This sequence belongs to the methyltransferase superfamily.

It localises to the golgi apparatus membrane. The polypeptide is Probable methyltransferase PMT15 (Arabidopsis thaliana (Mouse-ear cress)).